A 584-amino-acid chain; its full sequence is J protein JJJ2 (584 aa).

The J domain maps to 13–77; the sequence is TYYSILGLTS…DQKLRYDRDL (65 aa). The tract at residues 216 to 312 is disordered; the sequence is YSEDPNSCLG…FSSGSHDSNL (97 aa). Ser229 is modified (phosphoserine). Residues 241–253 are compositionally biased toward low complexity; sequence QQQQQQQQQQQQQ. The span at 269–282 shows a compositional bias: basic and acidic residues; it reads KDNKESKRESRVSP. Residues 299-312 show a composition bias toward polar residues; that stretch reads KTSTFSSGSHDSNL.

It localises to the cytoplasm. It is found in the nucleus. The polypeptide is J protein JJJ2 (JJJ2) (Saccharomyces cerevisiae (strain YJM789) (Baker's yeast)).